A 462-amino-acid chain; its full sequence is Cysteine--tRNA ligase (462 aa).

Cys28 serves as a coordination point for Zn(2+). The short motif at 30–40 (VTAYDLCHIGH) is the 'HIGH' region element. Cys209, His234, and Glu238 together coordinate Zn(2+). The 'KMSKS' region motif lies at 266–270 (KMSKS). ATP is bound at residue Lys269.

This sequence belongs to the class-I aminoacyl-tRNA synthetase family. Monomer. It depends on Zn(2+) as a cofactor.

It is found in the cytoplasm. The catalysed reaction is tRNA(Cys) + L-cysteine + ATP = L-cysteinyl-tRNA(Cys) + AMP + diphosphate. The sequence is that of Cysteine--tRNA ligase from Baumannia cicadellinicola subsp. Homalodisca coagulata.